Here is a 371-residue protein sequence, read N- to C-terminus: Putative ribonuclease 3 (371 aa).

Residues 10–136 form the RNase III domain; the sequence is AKSVKDKYIP…FLGAVCMAVD (127 aa).

It belongs to the IIV-6 142R family.

It carries out the reaction Endonucleolytic cleavage to 5'-phosphomonoester.. In terms of biological role, digests double-stranded RNA. The chain is Putative ribonuclease 3 from Frog virus 3 (isolate Goorha) (FV-3).